Here is a 225-residue protein sequence, read N- to C-terminus: Protein E26 (225 aa).

As to quaternary structure, interacts with proteins IE0 and IE1. Interacts with protein FP25K. Interacts with host importin alpha-16. Palmitoylated.

Its subcellular location is the host nucleus inner membrane. The protein resides in the virion. The protein localises to the host cytoplasm. It is found in the host nucleus. Its function is as follows. Plays a role in the sorting of ODV envelope proteins to the host inner nuclear membrane. May facilitate the fusion and release of nucleocapsids into the cytoplasm. Modulates the expression levels of IE0 and IE1. This chain is Protein E26 (DA26), found in Lepidoptera (butterflies and moths).